We begin with the raw amino-acid sequence, 1113 residues long: Nucleoporin NUP116/NSP116 (1113 aa).

Positions 1–35 (MFGVSRGAFPSATTQPFGSTGSTFGGQQQQQQPVA) are disordered. FG repeat units lie at residues 2–3 (FG), 17–18 (FG), 24–25 (FG), and 40–41 (FG). Over residues 13-33 (TTQPFGSTGSTFGGQQQQQQP) the composition is skewed to low complexity. The segment at 49 to 91 (TQAPAFGNFGNQTSNSPFGMSGSTTANGTPFGQSQLTNNNASG) is disordered. The GLFG 1; approximate repeat unit spans residues 55–58 (GNFG). 3 FG repeats span residues 66–67 (FG), 79–80 (FG), and 94–95 (FG). An interaction with AFG2 region spans residues 92 to 172 (SIFGGMGNNT…AGRKFGTSQN (81 aa)). Residues 110-166 (VVPNSTAGTSIKPFTTFEEKDPTTGVINVFQSITCMPEYRNFSFEELRFQDYQAGRK) form a GLE2 binding sequence (GLEBS) region. The tract at residues 160–362 (DYQAGRKFGT…AKPASGGLFG (203 aa)) is interaction with MEX67, not KAP95. 2 FG repeats span residues 167–168 (FG) and 189–190 (FG). One copy of the GLFG 2 repeat lies at 205–208 (GLFG). Residues 214–217 (GMFG) form a GLFG 3; approximate repeat. Residues 224–227 (GGFG) form a GLFG 4; approximate repeat. The stretch at 235–238 (GLFG) is one GLFG 5 repeat. An FG 10 repeat occupies 249-250 (FG). 3 GLFG repeats span residues 259–262 (GLFG), 276–279 (GLFG), and 288–291 (GLFG). The span at 265-279 (TNNPTNGTNNTGLFG) shows a compositional bias: low complexity. Positions 265–341 (TNNPTNGTNN…SNANANGGAF (77 aa)) are disordered. The segment covering 280 to 304 (QQNSNTNGGLFGQQQNSFGANNVSN) has biased composition (polar residues). The stretch at 297–298 (FG) is one FG 11 repeat. A GLFG 9; approximate repeat occupies 306–309 (GAFG). Residues 327–330 (GIFG) form a GLFG 10; approximate repeat. Positions 330-341 (GQSNANANGGAF) are enriched in low complexity. A GLFG 11; approximate repeat occupies 339 to 342 (GAFG). The FG 12 repeat unit spans residues 351 to 352 (FG). The stretch at 359–362 (GLFG) is one GLFG 12 repeat. The sufficient for interaction with MEX67 and KAP95 stretch occupies residues 362 to 535 (GQSAGSKAFG…GAKPTGFGNT (174 aa)). One copy of the FG 13 repeat lies at 370 to 371 (FG). Positions 371–606 (GMNTNPTGTT…NPASTSGGLF (236 aa)) are disordered. GLFG repeat units lie at residues 382-385 (GLFG), 395-398 (GLFG), 407-410 (GLFG), and 420-423 (GLFG). The segment covering 410-438 (GQNNQSQNQSGLFGQQNSSNAFGQPQQQG) has biased composition (low complexity). The FG 14 repeat unit spans residues 431 to 432 (FG). GLFG repeat units follow at residues 439–442 (GLFG) and 448–451 (GLFG). A compositionally biased stretch (polar residues) spans 451–464 (GQQQGASTFASGNA). Composition is skewed to low complexity over residues 465 to 478 (QNNS…QQQQ) and 485 to 522 (GQQN…QQNN). The FG 15 repeat unit spans residues 470–471 (FG). GLFG repeat units follow at residues 482-485 (GLFG) and 497-500 (GLFG). 3 FG repeats span residues 510–511 (FG), 525–526 (FG), and 532–533 (FG). The segment covering 532–569 (FGNTSLFSNSTTNQSNGISGNNLQQQSGGLFQNKQQPA) has biased composition (polar residues). The interaction with KAP95, not MEX67 stretch occupies residues 536-732 (SLFSNSTTNQ…QSQNALQQQQ (197 aa)). GLFG repeat units follow at residues 572–575 (GLFG), 585–588 (GLFG), and 604–607 (GLFG). The segment covering 588–603 (GNNQVANQNNPASTSG) has biased composition (polar residues). Residues 616–617 (FG) form an FG 19 repeat. Residues 630–633 (GIFG) form a GLFG 24; approximate repeat. 3 GLFG repeats span residues 648-651 (GLFG), 665-668 (GLFG), and 683-686 (GLFG). Residues 678–691 (SNGSTGLFGSNNTS) show a composition bias toward low complexity. Disordered regions lie at residues 678–736 (SNGS…QQQR) and 868–939 (SEEK…ENVA). Residues 692–708 (QSTNAGGLFQNNTSTNT) show a composition bias toward polar residues. Residues 719-736 (QSMAQSQNALQQQQQQQR) show a composition bias toward low complexity. Ser886 bears the Phosphoserine mark. Basic and acidic residues predominate over residues 916–939 (NDGEDSATKHHSRNMDEENKENVA). The Peptidase S59 domain maps to 967–1109 (NENYYISPSL…GTYVFIVNHA (143 aa)). Residues 967–1113 (NENYYISPSL…FIVNHAAEQT (147 aa)) are interaction with NUP82 NPC subcomplex. Positions 969 to 1108 (NYYISPSLDT…SGTYVFIVNH (140 aa)) are nucleoporin RNA-binding motif (NRM).

Belongs to the nucleoporin GLFG family. In terms of assembly, component of the nuclear pore complex (NPC). NPC constitutes the exclusive means of nucleocytoplasmic transport. NPCs allow the passive diffusion of ions and small molecules and the active, nuclear transport receptor-mediated bidirectional transport of macromolecules such as proteins, RNAs, ribonucleoparticles (RNPs), and ribosomal subunits across the nuclear envelope. Due to its 8-fold rotational symmetry, all subunits are present with 8 copies or multiples thereof. NUP116 interacts with the NUP82 subcomplex and GLE2. Through its FG repeats it interacts with numerous karyopherins including KAP95, PSE1 (GSP1-GDP dependent), MEX67, and to homomeric RNA. Interacts with CEX1. Interacts (via N-terminus) with AFG2 (via N-terminus).

It localises to the nucleus. It is found in the nuclear pore complex. The protein resides in the nucleus membrane. Functionally, functions as a component of the nuclear pore complex (NPC). NPC components, collectively referred to as nucleoporins (NUPs), can play the role of both NPC structural components and of docking or interaction partners for transiently associated nuclear transport factors. Active directional transport is assured by both, a Phe-Gly (FG) repeat affinity gradient for these transport factors across the NPC and a transport cofactor concentration gradient across the nuclear envelope (GSP1 and GSP2 GTPases associated predominantly with GTP in the nucleus, with GDP in the cytoplasm). Plays an important role in several nuclear export and import pathways including poly(A)+ RNA, tRNA, pre-ribosome, and protein transport. By binding ATPase AFG2, promotes AFG2-mediated release of shuttling protein RLP24 from pre-60S ribosomal particles. The protein is Nucleoporin NUP116/NSP116 (NUP116) of Saccharomyces cerevisiae (strain ATCC 204508 / S288c) (Baker's yeast).